Here is a 572-residue protein sequence, read N- to C-terminus: Triacylglycerol lipase OBL1 (572 aa).

Residues 110–130 (GYLVEFFLNLFSLNGNFLGLL) form a helical membrane-spanning segment. The segment at 320–356 (IPPSESSKSSTSFSDSDAHTGSDLSSDSERPTDTRKK) is disordered. Residues 323 to 334 (SESSKSSTSFSD) show a composition bias toward low complexity. Basic and acidic residues predominate over residues 346–356 (DSERPTDTRKK). A GXSXG motif is present at residues 391 to 395 (GHSLG). Catalysis depends on S393, which acts as the Nucleophile. Catalysis depends on charge relay system residues D457 and H550.

Belongs to the AB hydrolase superfamily. Lipase family. Expressed in pollen grains and pollen tubes.

Its subcellular location is the lipid droplet. The protein resides in the membrane. It catalyses the reaction 1,2-di-(9Z-octadecenoyl)-glycerol + (9Z)-octadecenoate + H(+) = 1,2,3-tri-(9Z-octadecenoyl)-glycerol + H2O. The enzyme catalyses 1-(9Z-octadecenoyl)-glycerol + H2O = glycerol + (9Z)-octadecenoate + H(+). In terms of biological role, acid lipase that can hydrolyze a range of triacylglycerols without a clear preference for acyl-chains. Can also cleave 1,2-diacylglycerol, 1,3-diacylglycerol and 1-monoacylglycerol, but not phosphatidylcholine, phosphatidylethanolamine, or sterol esters. Required for pollen tube growth. Triacylglycerol hydrolysis by OBL1 may provide acyl groups for the synthesis of membrane lipids in growing pollen tubes. This Nicotiana tabacum (Common tobacco) protein is Triacylglycerol lipase OBL1.